Reading from the N-terminus, the 316-residue chain is 4-hydroxy-3-methylbut-2-enyl diphosphate reductase (316 aa).

[4Fe-4S] cluster is bound at residue Cys-12. Residues His-43 and His-81 each contribute to the (2E)-4-hydroxy-3-methylbut-2-enyl diphosphate site. Dimethylallyl diphosphate-binding residues include His-43 and His-81. Residues His-43 and His-81 each coordinate isopentenyl diphosphate. Cys-103 contributes to the [4Fe-4S] cluster binding site. His-131 serves as a coordination point for (2E)-4-hydroxy-3-methylbut-2-enyl diphosphate. Dimethylallyl diphosphate is bound at residue His-131. His-131 contributes to the isopentenyl diphosphate binding site. The active-site Proton donor is the Glu-133. Thr-170 provides a ligand contact to (2E)-4-hydroxy-3-methylbut-2-enyl diphosphate. [4Fe-4S] cluster is bound at residue Cys-198. Positions 226, 228, and 271 each coordinate (2E)-4-hydroxy-3-methylbut-2-enyl diphosphate. Dimethylallyl diphosphate contacts are provided by Ser-226, Asn-228, and Ser-271. Isopentenyl diphosphate-binding residues include Ser-226, Asn-228, and Ser-271.

The protein belongs to the IspH family. The cofactor is [4Fe-4S] cluster.

The enzyme catalyses isopentenyl diphosphate + 2 oxidized [2Fe-2S]-[ferredoxin] + H2O = (2E)-4-hydroxy-3-methylbut-2-enyl diphosphate + 2 reduced [2Fe-2S]-[ferredoxin] + 2 H(+). It carries out the reaction dimethylallyl diphosphate + 2 oxidized [2Fe-2S]-[ferredoxin] + H2O = (2E)-4-hydroxy-3-methylbut-2-enyl diphosphate + 2 reduced [2Fe-2S]-[ferredoxin] + 2 H(+). The protein operates within isoprenoid biosynthesis; dimethylallyl diphosphate biosynthesis; dimethylallyl diphosphate from (2E)-4-hydroxy-3-methylbutenyl diphosphate: step 1/1. It participates in isoprenoid biosynthesis; isopentenyl diphosphate biosynthesis via DXP pathway; isopentenyl diphosphate from 1-deoxy-D-xylulose 5-phosphate: step 6/6. Functionally, catalyzes the conversion of 1-hydroxy-2-methyl-2-(E)-butenyl 4-diphosphate (HMBPP) into a mixture of isopentenyl diphosphate (IPP) and dimethylallyl diphosphate (DMAPP). Acts in the terminal step of the DOXP/MEP pathway for isoprenoid precursor biosynthesis. This chain is 4-hydroxy-3-methylbut-2-enyl diphosphate reductase, found in Geobacillus thermodenitrificans (strain NG80-2).